Here is a 267-residue protein sequence, read N- to C-terminus: Pyridoxine 5'-phosphate synthase (267 aa).

N8 contacts 3-amino-2-oxopropyl phosphate. 10–11 (DH) lines the 1-deoxy-D-xylulose 5-phosphate pocket. Residue R19 participates in 3-amino-2-oxopropyl phosphate binding. The active-site Proton acceptor is the H44. 2 residues coordinate 1-deoxy-D-xylulose 5-phosphate: R46 and H51. Residue E71 is the Proton acceptor of the active site. Residue T101 participates in 1-deoxy-D-xylulose 5-phosphate binding. H219 acts as the Proton donor in catalysis. 3-amino-2-oxopropyl phosphate-binding positions include G220 and 241–242 (GH).

This sequence belongs to the PNP synthase family. Homooctamer; tetramer of dimers.

The protein localises to the cytoplasm. The catalysed reaction is 3-amino-2-oxopropyl phosphate + 1-deoxy-D-xylulose 5-phosphate = pyridoxine 5'-phosphate + phosphate + 2 H2O + H(+). The protein operates within cofactor biosynthesis; pyridoxine 5'-phosphate biosynthesis; pyridoxine 5'-phosphate from D-erythrose 4-phosphate: step 5/5. Its function is as follows. Catalyzes the complicated ring closure reaction between the two acyclic compounds 1-deoxy-D-xylulose-5-phosphate (DXP) and 3-amino-2-oxopropyl phosphate (1-amino-acetone-3-phosphate or AAP) to form pyridoxine 5'-phosphate (PNP) and inorganic phosphate. This chain is Pyridoxine 5'-phosphate synthase, found in Helicobacter hepaticus (strain ATCC 51449 / 3B1).